The sequence spans 460 residues: tRNA modification GTPase MnmE (460 aa).

Arg29, Glu89, and Arg128 together coordinate (6S)-5-formyl-5,6,7,8-tetrahydrofolate. The 159-residue stretch at 224–382 folds into the TrmE-type G domain; it reads GVPTVIIGKP…LKQNLLEIIQ (159 aa). Asn234 serves as a coordination point for K(+). GTP is bound by residues 234–239, 253–259, and 278–281; these read NAGKST, SEIAGTT, and DTAG. Ser238 contacts Mg(2+). K(+) contacts are provided by Ser253, Ile255, and Thr258. Thr259 is a binding site for Mg(2+). Lys460 lines the (6S)-5-formyl-5,6,7,8-tetrahydrofolate pocket.

It belongs to the TRAFAC class TrmE-Era-EngA-EngB-Septin-like GTPase superfamily. TrmE GTPase family. Homodimer. Heterotetramer of two MnmE and two MnmG subunits. The cofactor is K(+).

Its subcellular location is the cytoplasm. In terms of biological role, exhibits a very high intrinsic GTPase hydrolysis rate. Involved in the addition of a carboxymethylaminomethyl (cmnm) group at the wobble position (U34) of certain tRNAs, forming tRNA-cmnm(5)s(2)U34. This is tRNA modification GTPase MnmE from Cytophaga hutchinsonii (strain ATCC 33406 / DSM 1761 / CIP 103989 / NBRC 15051 / NCIMB 9469 / D465).